The primary structure comprises 465 residues: MTQNQLDKKSEAWSALFSEPMSDLVKRYTASVFFDKRLWQADIEGSLAHAGMLAAQGIIGKQDHAEIERGMAQIRAEIESGAFEWKLDLEDVHLNIEARLTQLVGDAGKRLHTGRSRNDQVATDVRLWLRGEIDLIAELLVALQLSLVDIAEKNVEVILPGFTHLQVAQPVSFGHHMLAYVEMFSRDAERLQDVRKRVNRLPLGAAALAGTSYPLDRELVARTLKMDGVCQNSLDAVSDRDFAIEFTAAASLCMVHVSRMSEELILWMSQNFGFIQIADRFTTGSSIMPQKKNPDVPELARGKTGRVVGHLMALITLMKGQPLAYNKDNQEDKEPLFDTVDTLKDTLRIFAEMIGGITVKPEAMEAAALRGYATATDLADYLVKKGLPFRDAHETVAHAVKAATSHKVDLAELPLAVLQQFNPNIEKDVYDVLSLRGSLNARNILGGTAPAQVKAQIARHRARLA.

Belongs to the lyase 1 family. Argininosuccinate lyase subfamily.

The protein localises to the cytoplasm. The enzyme catalyses 2-(N(omega)-L-arginino)succinate = fumarate + L-arginine. Its pathway is amino-acid biosynthesis; L-arginine biosynthesis; L-arginine from L-ornithine and carbamoyl phosphate: step 3/3. The chain is Argininosuccinate lyase from Variovorax paradoxus (strain S110).